A 282-amino-acid chain; its full sequence is Homeobox protein vex1 (282 aa).

Positions alanine 129–threonine 188 form a DNA-binding region, homeobox.

The protein localises to the nucleus. In terms of biological role, transcriptional repressor. Acts in a ventral signaling pathway downstream of bmp4 to antagonize the Spemann organizer and ventrally pattern the embryonic mesoderm. Represses transcription of the dorsal genes gsc and otx2. The protein is Homeobox protein vex1 of Xenopus tropicalis (Western clawed frog).